A 578-amino-acid chain; its full sequence is MPVVDIDTDELRGLTGRTDTSDEEFKEDLFGLGLEFEGETDEDLLQFEFAPDRLDRLSVEGVARSLRYHYGDDRGVYVPETNDPEWTIEVDESVPDERPYVTGAVIRGVDLDEGALDSLIQLQEKLHATMGRGRAKGAIGIHDLAMVKGAPLQEGSEPSITYRGVDPDGVSFVPLDANDELTPNEVLAEHDTGQTYADLVEGLDRYPAIYDELGLFSFPPVINGKRTEVTTGSRELFVELTGTDQWTIDRMCNIVCYALSARGATIEQVEVNYADGATAPSEYGAELVRPNFDTDEKSVSHDRIETLLGVDFEPEEIVDCFERAGLDASYTLDEDVTYEVEIPPYRVDVLHPLDLVDDVGRAYGFDNLEPRYPDVGTVGGRHERSRLEDAVRTSLVGLGFEDLLNFHMTSGTENYDRMNLEAGSDAFGGGNPVEITEPYSEEYTQLRTWAIPSLVMLLERNTHNAYPQDVAEVGFAAERDDSENTNVAERRHVAGAVARRDASYEAAKGRLQAVCDDFRAELETPRTEHPSFIDGRTAAVVIDGEVVGVIGEVHPAVLVEHDLEVPVAAFEFHLDALR.

Positions 292–370 constitute a B5 domain; it reads FDTDEKSVSH…RAYGFDNLEP (79 aa). Residues Asp348, Asp354, Asp357, and Asp358 each coordinate Mg(2+).

Belongs to the phenylalanyl-tRNA synthetase beta subunit family. Type 2 subfamily. As to quaternary structure, tetramer of two alpha and two beta subunits. The cofactor is Mg(2+).

It localises to the cytoplasm. The catalysed reaction is tRNA(Phe) + L-phenylalanine + ATP = L-phenylalanyl-tRNA(Phe) + AMP + diphosphate + H(+). The chain is Phenylalanine--tRNA ligase beta subunit from Halorubrum lacusprofundi (strain ATCC 49239 / DSM 5036 / JCM 8891 / ACAM 34).